The sequence spans 170 residues: Lipoprotein signal peptidase (170 aa).

The next 3 membrane-spanning stretches (helical) occupy residues 9 to 29 (FNIF…KYLV), 72 to 92 (IFFL…SLKE), and 96 to 118 (IARI…RLFR). Catalysis depends on residues aspartate 124 and aspartate 146. The chain crosses the membrane as a helical span at residues 143-163 (NFADSYVVIGMILFLVYDFFI).

The protein belongs to the peptidase A8 family.

The protein resides in the cell inner membrane. It catalyses the reaction Release of signal peptides from bacterial membrane prolipoproteins. Hydrolyzes -Xaa-Yaa-Zaa-|-(S,diacylglyceryl)Cys-, in which Xaa is hydrophobic (preferably Leu), and Yaa (Ala or Ser) and Zaa (Gly or Ala) have small, neutral side chains.. It functions in the pathway protein modification; lipoprotein biosynthesis (signal peptide cleavage). In terms of biological role, this protein specifically catalyzes the removal of signal peptides from prolipoproteins. The chain is Lipoprotein signal peptidase from Borreliella afzelii (strain PKo) (Borrelia afzelii).